We begin with the raw amino-acid sequence, 182 residues long: Flightin (182 aa).

Positions 1 to 15 (MADEEDPWGFDDGGE) are enriched in acidic residues. Residues 1–76 (MADEEDPWGF…PPPPEDDGYR (76 aa)) form a disordered region.

In terms of processing, several forms of flightin are thought to be produced through post-translational modifications, possibly by phosphorylation. Found only in indirect flight muscles (IFM).

Possibly involved in the regulation of flight muscles contraction, possibly by modulating actin-myosin interaction. In Drosophila melanogaster (Fruit fly), this protein is Flightin (fln).